Consider the following 58-residue polypeptide: Large ribosomal subunit protein bL32 (58 aa).

This sequence belongs to the bacterial ribosomal protein bL32 family.

The sequence is that of Large ribosomal subunit protein bL32 from Staphylococcus aureus (strain NCTC 8325 / PS 47).